The sequence spans 302 residues: Oxygen-dependent coproporphyrinogen-III oxidase (302 aa).

Residue S94 participates in substrate binding. Residues H98 and H108 each coordinate a divalent metal cation. H108 functions as the Proton donor in the catalytic mechanism. N110–R112 contacts substrate. The a divalent metal cation site is built by H147 and H177. The interval Y242–E277 is important for dimerization. G260 to R262 contacts substrate.

Belongs to the aerobic coproporphyrinogen-III oxidase family. Homodimer. Requires a divalent metal cation as cofactor.

Its subcellular location is the cytoplasm. It carries out the reaction coproporphyrinogen III + O2 + 2 H(+) = protoporphyrinogen IX + 2 CO2 + 2 H2O. The protein operates within porphyrin-containing compound metabolism; protoporphyrin-IX biosynthesis; protoporphyrinogen-IX from coproporphyrinogen-III (O2 route): step 1/1. In terms of biological role, involved in the heme biosynthesis. Catalyzes the aerobic oxidative decarboxylation of propionate groups of rings A and B of coproporphyrinogen-III to yield the vinyl groups in protoporphyrinogen-IX. The chain is Oxygen-dependent coproporphyrinogen-III oxidase from Erwinia tasmaniensis (strain DSM 17950 / CFBP 7177 / CIP 109463 / NCPPB 4357 / Et1/99).